A 188-amino-acid chain; its full sequence is Elongation factor P (188 aa).

Belongs to the elongation factor P family.

It is found in the cytoplasm. The protein operates within protein biosynthesis; polypeptide chain elongation. Its function is as follows. Involved in peptide bond synthesis. Stimulates efficient translation and peptide-bond synthesis on native or reconstituted 70S ribosomes in vitro. Probably functions indirectly by altering the affinity of the ribosome for aminoacyl-tRNA, thus increasing their reactivity as acceptors for peptidyl transferase. The sequence is that of Elongation factor P from Rickettsia rickettsii (strain Iowa).